A 233-amino-acid polypeptide reads, in one-letter code: Antigenic membrane protein (233 aa).

The first 32 residues, 1–32, serve as a signal peptide directing secretion; that stretch reads MQNQKNQKSLVAKVLVLFAAVALMFVGVQVFA. Residues 206 to 226 traverse the membrane as a helical segment; that stretch reads FLTLVAVVVVAAVAGGVFFFV.

It localises to the cell membrane. This chain is Antigenic membrane protein (amp), found in Onion yellows phytoplasma (strain OY-M).